The primary structure comprises 213 residues: Probable elongation factor 1-beta/1-delta 1 (213 aa).

Belongs to the EF-1-beta/EF-1-delta family. EF-1 is composed of 4 subunits: alpha, beta, delta, and gamma.

Functionally, EF-1-beta and EF-1-delta stimulate the exchange of GDP bound to EF-1-alpha to GTP. This is Probable elongation factor 1-beta/1-delta 1 (eef-1B.1) from Caenorhabditis elegans.